A 392-amino-acid chain; its full sequence is Queuine tRNA-ribosyltransferase (392 aa).

D92 serves as the catalytic Proton acceptor. Substrate is bound by residues 92–96 (DSGGF), D146, Q188, and G215. An RNA binding region spans residues 246–252 (GVGSPED). The Nucleophile role is filled by D265. An RNA binding; important for wobble base 34 recognition region spans residues 270–274 (TRLGR). Zn(2+) contacts are provided by C303, C305, C308, and H334.

This sequence belongs to the queuine tRNA-ribosyltransferase family. Homodimer. Within each dimer, one monomer is responsible for RNA recognition and catalysis, while the other monomer binds to the replacement base PreQ1. Requires Zn(2+) as cofactor.

It carries out the reaction 7-aminomethyl-7-carbaguanine + guanosine(34) in tRNA = 7-aminomethyl-7-carbaguanosine(34) in tRNA + guanine. It participates in tRNA modification; tRNA-queuosine biosynthesis. Functionally, catalyzes the base-exchange of a guanine (G) residue with the queuine precursor 7-aminomethyl-7-deazaguanine (PreQ1) at position 34 (anticodon wobble position) in tRNAs with GU(N) anticodons (tRNA-Asp, -Asn, -His and -Tyr). Catalysis occurs through a double-displacement mechanism. The nucleophile active site attacks the C1' of nucleotide 34 to detach the guanine base from the RNA, forming a covalent enzyme-RNA intermediate. The proton acceptor active site deprotonates the incoming PreQ1, allowing a nucleophilic attack on the C1' of the ribose to form the product. After dissociation, two additional enzymatic reactions on the tRNA convert PreQ1 to queuine (Q), resulting in the hypermodified nucleoside queuosine (7-(((4,5-cis-dihydroxy-2-cyclopenten-1-yl)amino)methyl)-7-deazaguanosine). The chain is Queuine tRNA-ribosyltransferase from Herpetosiphon aurantiacus (strain ATCC 23779 / DSM 785 / 114-95).